A 1273-amino-acid chain; its full sequence is DNA gyrase subunit A (1273 aa).

The Topo IIA-type catalytic domain occupies 42–931 (LPEVRDGLKP…VDGDVNDEDL (890 aa)). The active-site O-(5'-phospho-DNA)-tyrosine intermediate is the Tyr130. The 141-residue stretch at 256-396 (LFGAFISGGF…VQQMLLEFGV (141 aa)) folds into the DOD-type homing endonuclease domain. The short motif at 958–964 (QKRGGKG) is the GyrA-box element.

Belongs to the type II topoisomerase GyrA/ParC subunit family. As to quaternary structure, heterotetramer, composed of two GyrA and two GyrB chains. In the heterotetramer, GyrA contains the active site tyrosine that forms a transient covalent intermediate with the DNA, while GyrB binds cofactors catalyzes ATP hydrolysis. Post-translationally, this protein undergoes a protein self splicing that involves a post-translational excision of the intervening region (intein) followed by peptide ligation.

The protein localises to the cytoplasm. It catalyses the reaction ATP-dependent breakage, passage and rejoining of double-stranded DNA.. DNA supercoiling is inhibited by fluoroquinolones; IC(50) 1 ug/ml for sitafloxacin. In terms of biological role, a type II topoisomerase that negatively supercoils closed circular double-stranded (ds) DNA in an ATP-dependent manner to modulate DNA topology and maintain chromosomes in an underwound state. Negative supercoiling favors strand separation, and DNA replication, transcription, recombination and repair, all of which involve strand separation. Also able to catalyze the interconversion of other topological isomers of dsDNA rings, including catenanes and knotted rings. Type II topoisomerases break and join 2 DNA strands simultaneously in an ATP-dependent manner. This is DNA gyrase subunit A from Mycobacterium leprae (strain TN).